Reading from the N-terminus, the 321-residue chain is Lipoyl synthase (321 aa).

Cys-68, Cys-73, Cys-79, Cys-94, Cys-98, Cys-101, and Ser-308 together coordinate [4Fe-4S] cluster. In terms of domain architecture, Radical SAM core spans 80-297; sequence FNHGTATFMI…KAEALAMGFT (218 aa).

The protein belongs to the radical SAM superfamily. Lipoyl synthase family. It depends on [4Fe-4S] cluster as a cofactor.

It is found in the cytoplasm. It catalyses the reaction [[Fe-S] cluster scaffold protein carrying a second [4Fe-4S](2+) cluster] + N(6)-octanoyl-L-lysyl-[protein] + 2 oxidized [2Fe-2S]-[ferredoxin] + 2 S-adenosyl-L-methionine + 4 H(+) = [[Fe-S] cluster scaffold protein] + N(6)-[(R)-dihydrolipoyl]-L-lysyl-[protein] + 4 Fe(3+) + 2 hydrogen sulfide + 2 5'-deoxyadenosine + 2 L-methionine + 2 reduced [2Fe-2S]-[ferredoxin]. The protein operates within protein modification; protein lipoylation via endogenous pathway; protein N(6)-(lipoyl)lysine from octanoyl-[acyl-carrier-protein]: step 2/2. In terms of biological role, catalyzes the radical-mediated insertion of two sulfur atoms into the C-6 and C-8 positions of the octanoyl moiety bound to the lipoyl domains of lipoate-dependent enzymes, thereby converting the octanoylated domains into lipoylated derivatives. In Salmonella typhi, this protein is Lipoyl synthase.